A 524-amino-acid chain; its full sequence is Bifunctional methyltransferase (524 aa).

The tract at residues 1 to 306 is hemK; that stretch reads MQCSIKQILS…GHSRVILFSP (306 aa). Residues 1–308 form an RF MTase region; that stretch reads MQCSIKQILS…SRVILFSPIN (308 aa). Residues 146-150, aspartate 169, tryptophan 198, asparagine 213, glutamate 353, glutamate 378, asparagine 405, and aspartate 427 each bind S-adenosyl-L-methionine; that span reads GTGSG. 213–216 contributes to the substrate binding site; the sequence is NPPY. Residues 307 to 524 form a tRNA (guanine-N(7)-)-methyltransferase region; sequence INLNRSYARR…MILRHVLGDH (218 aa). Residues 311 to 524 form a tRNA MTase region; the sequence is RSYARRIGKS…MILRHVLGDH (214 aa). Residue aspartate 427 is part of the active site. Residues lysine 431 and aspartate 463 each contribute to the substrate site.

The protein in the C-terminal section; belongs to the class I-like SAM-binding methyltransferase superfamily. TrmB family. In the N-terminal section; belongs to the protein N5-glutamine methyltransferase family. PrmC subfamily.

It catalyses the reaction L-glutaminyl-[peptide chain release factor] + S-adenosyl-L-methionine = N(5)-methyl-L-glutaminyl-[peptide chain release factor] + S-adenosyl-L-homocysteine + H(+). It carries out the reaction guanosine(46) in tRNA + S-adenosyl-L-methionine = N(7)-methylguanosine(46) in tRNA + S-adenosyl-L-homocysteine. Its function is as follows. Methylates the class 1 translation termination release factors RF1/PrfA and RF2/PrfB on the glutamine residue of the universally conserved GGQ motif. Catalyzes the formation of N(7)-methylguanine at position 46 (m7G46) in tRNA. The chain is Bifunctional methyltransferase (prmC/trmB) from Rickettsia conorii (strain ATCC VR-613 / Malish 7).